The primary structure comprises 78 residues: D-alanyl carrier protein (78 aa).

The Carrier domain occupies 1-78 (MEFKNQVYGI…HIAEQLAEMK (78 aa)). O-(pantetheine 4'-phosphoryl)serine is present on Ser36.

Belongs to the DltC family. Post-translationally, 4'-phosphopantetheine is transferred from CoA to a specific serine of apo-DCP.

Its subcellular location is the cytoplasm. It functions in the pathway cell wall biogenesis; lipoteichoic acid biosynthesis. In terms of biological role, carrier protein involved in the D-alanylation of lipoteichoic acid (LTA). The loading of thioester-linked D-alanine onto DltC is catalyzed by D-alanine--D-alanyl carrier protein ligase DltA. The DltC-carried D-alanyl group is further transferred to cell membrane phosphatidylglycerol (PG) by forming an ester bond, probably catalyzed by DltD. D-alanylation of LTA plays an important role in modulating the properties of the cell wall in Gram-positive bacteria, influencing the net charge of the cell wall. This Bacillus pumilus (strain SAFR-032) protein is D-alanyl carrier protein.